The following is a 248-amino-acid chain: 5'-nucleotidase SurE (248 aa).

A divalent metal cation contacts are provided by Asp8, Asp9, Ser39, and Asn92.

This sequence belongs to the SurE nucleotidase family. The cofactor is a divalent metal cation.

Its subcellular location is the cytoplasm. It catalyses the reaction a ribonucleoside 5'-phosphate + H2O = a ribonucleoside + phosphate. Its function is as follows. Nucleotidase that shows phosphatase activity on nucleoside 5'-monophosphates. The sequence is that of 5'-nucleotidase SurE from Tolumonas auensis (strain DSM 9187 / NBRC 110442 / TA 4).